A 167-amino-acid chain; its full sequence is NAD(P)H-quinone oxidoreductase subunit I, chloroplastic (167 aa).

2 consecutive 4Fe-4S ferredoxin-type domains span residues 55-84 and 95-124; these read GRIH…VDWK and LNYS…MTEE. Residues Cys64, Cys67, Cys70, Cys74, Cys104, Cys107, Cys110, and Cys114 each coordinate [4Fe-4S] cluster.

Belongs to the complex I 23 kDa subunit family. As to quaternary structure, NDH is composed of at least 16 different subunits, 5 of which are encoded in the nucleus. The cofactor is [4Fe-4S] cluster.

It localises to the plastid. It is found in the chloroplast thylakoid membrane. It carries out the reaction a plastoquinone + NADH + (n+1) H(+)(in) = a plastoquinol + NAD(+) + n H(+)(out). The enzyme catalyses a plastoquinone + NADPH + (n+1) H(+)(in) = a plastoquinol + NADP(+) + n H(+)(out). NDH shuttles electrons from NAD(P)H:plastoquinone, via FMN and iron-sulfur (Fe-S) centers, to quinones in the photosynthetic chain and possibly in a chloroplast respiratory chain. The immediate electron acceptor for the enzyme in this species is believed to be plastoquinone. Couples the redox reaction to proton translocation, and thus conserves the redox energy in a proton gradient. This chain is NAD(P)H-quinone oxidoreductase subunit I, chloroplastic, found in Atropa belladonna (Belladonna).